A 195-amino-acid polypeptide reads, in one-letter code: Ribonuclease HII (195 aa).

The 190-residue stretch at 6–195 (SLIAGVDEVG…KSFISRLKKN (190 aa)) folds into the RNase H type-2 domain. Residues Asp12, Glu13, and Asp108 each coordinate a divalent metal cation.

This sequence belongs to the RNase HII family. Mn(2+) is required as a cofactor. The cofactor is Mg(2+).

Its subcellular location is the cytoplasm. The enzyme catalyses Endonucleolytic cleavage to 5'-phosphomonoester.. Functionally, endonuclease that specifically degrades the RNA of RNA-DNA hybrids. The chain is Ribonuclease HII from Prochlorococcus marinus (strain NATL2A).